The following is a 273-amino-acid chain: 4-hydroxy-tetrahydrodipicolinate reductase (273 aa).

Residues 8–13, Asp-35, 103–105, and 129–132 each bind NAD(+); these read GALGRM, GTT, and SQNY. His-161 acts as the Proton donor/acceptor in catalysis. His-162 serves as a coordination point for (S)-2,3,4,5-tetrahydrodipicolinate. The active-site Proton donor is the Lys-165. Residue 171–172 participates in (S)-2,3,4,5-tetrahydrodipicolinate binding; the sequence is GT.

This sequence belongs to the DapB family.

Its subcellular location is the cytoplasm. The enzyme catalyses (S)-2,3,4,5-tetrahydrodipicolinate + NAD(+) + H2O = (2S,4S)-4-hydroxy-2,3,4,5-tetrahydrodipicolinate + NADH + H(+). It carries out the reaction (S)-2,3,4,5-tetrahydrodipicolinate + NADP(+) + H2O = (2S,4S)-4-hydroxy-2,3,4,5-tetrahydrodipicolinate + NADPH + H(+). Its pathway is amino-acid biosynthesis; L-lysine biosynthesis via DAP pathway; (S)-tetrahydrodipicolinate from L-aspartate: step 4/4. Its function is as follows. Catalyzes the conversion of 4-hydroxy-tetrahydrodipicolinate (HTPA) to tetrahydrodipicolinate. This is 4-hydroxy-tetrahydrodipicolinate reductase from Methanococcus aeolicus (strain ATCC BAA-1280 / DSM 17508 / OCM 812 / Nankai-3).